We begin with the raw amino-acid sequence, 131 residues long: D-ribose pyranase (131 aa).

H20 acts as the Proton donor in catalysis. Substrate is bound by residues D28, H98, and 120–122; that span reads YSN.

It belongs to the RbsD / FucU family. RbsD subfamily. Homodecamer.

It is found in the cytoplasm. The catalysed reaction is beta-D-ribopyranose = beta-D-ribofuranose. The protein operates within carbohydrate metabolism; D-ribose degradation; D-ribose 5-phosphate from beta-D-ribopyranose: step 1/2. Catalyzes the interconversion of beta-pyran and beta-furan forms of D-ribose. The polypeptide is D-ribose pyranase (Pediococcus pentosaceus (strain ATCC 25745 / CCUG 21536 / LMG 10740 / 183-1w)).